Here is a 117-residue protein sequence, read N- to C-terminus: Large ribosomal subunit protein bL17 (117 aa).

The protein belongs to the bacterial ribosomal protein bL17 family. In terms of assembly, part of the 50S ribosomal subunit. Contacts protein L32.

The chain is Large ribosomal subunit protein bL17 from Campylobacter lari (strain RM2100 / D67 / ATCC BAA-1060).